A 204-amino-acid chain; its full sequence is High frequency lysogenization protein HflD homolog (204 aa).

Belongs to the HflD family.

The protein localises to the cytoplasm. The protein resides in the cell inner membrane. This is High frequency lysogenization protein HflD homolog from Xanthomonas axonopodis pv. citri (strain 306).